Here is a 154-residue protein sequence, read N- to C-terminus: uncharacterized protein (154 aa).

The next 3 membrane-spanning stretches (helical) occupy residues 26–48, 97–119, and 132–150; these read VSGW…GVVT, IAMF…LIVF, and GLYT…YCAW.

The protein resides in the cell membrane. This is an uncharacterized protein from Archaeoglobus fulgidus (strain ATCC 49558 / DSM 4304 / JCM 9628 / NBRC 100126 / VC-16).